Consider the following 367-residue polypeptide: Alanine racemase (367 aa).

The active-site Proton acceptor; specific for D-alanine is Lys-40. Lys-40 bears the N6-(pyridoxal phosphate)lysine mark. Arg-136 serves as a coordination point for substrate. The Proton acceptor; specific for L-alanine role is filled by Tyr-263. Residue Met-310 participates in substrate binding.

It belongs to the alanine racemase family. Pyridoxal 5'-phosphate serves as cofactor.

It carries out the reaction L-alanine = D-alanine. The protein operates within amino-acid biosynthesis; D-alanine biosynthesis; D-alanine from L-alanine: step 1/1. Functionally, catalyzes the interconversion of L-alanine and D-alanine. May also act on other amino acids. This chain is Alanine racemase (alr), found in Streptococcus pneumoniae (strain ATCC 700669 / Spain 23F-1).